Here is a 622-residue protein sequence, read N- to C-terminus: Low affinity potassium transport system protein Kup (622 aa).

12 helical membrane-spanning segments follow: residues 9-29 (LPAITLAAIGVVYGDIGTSPL), 49-69 (VFGFLSLIFWLLIFVVSIKYL), 103-123 (VIMGLIGGSFFYGEVVITPAI), 137-157 (PQLDTWIVPLSIIVLTLLFMI), 165-185 (VGKLFAPIMLTWFLILAGLGL), 213-233 (VSFIALGAVVLSITGVEALYA), 247-267 (WFTVVLPSLTLNYFGQGALLL), 276-296 (PFFLLAPDWALIPLLIIAALA), 337-357 (IYIPFVNWMLYVAVVIVIVSF), 363-383 (LAAAYGIAVTGTMVLTSILST), 396-416 (FVALILIAFLCVDIPLFTANL), and 419-439 (LLSGGWLPLSLGTVMFIVMTT).

This sequence belongs to the HAK/KUP transporter (TC 2.A.72) family.

The protein localises to the cell inner membrane. It catalyses the reaction K(+)(in) + H(+)(in) = K(+)(out) + H(+)(out). Functionally, responsible for the low-affinity transport of potassium into the cell. Likely operates as a K(+):H(+) symporter. This is Low affinity potassium transport system protein Kup from Escherichia coli (strain K12 / MC4100 / BW2952).